A 415-amino-acid polypeptide reads, in one-letter code: MSLEAIRFARSDPTNVQVSVLDQLLLPYLTKYLPIYTISDGYAVIKSMQVRGAPAIAIVGSLSILMESQMMLSNSFDQTQWFYDLLDWEDTRSKLTGRLDYLLSSRPTAVNLSNALKEIAQILKETNDLKQFNSELYNYVCKLIDEDLSNNIKMGDNGAKFLLESLSKEGFNEEFAVLTICNTGSLATSGYGTALGVIRSLWNDSKSKDPKVNTDGSLKPLASADSKMKHVFPLETRPYNQGSRLTAYELVHDEIPATLITDSSVTYRIKTSPYPIKAAFVGADRIVRNGDTANKIGTFQLAIICKQFGIKFFVVAPKTTIDNVTPNGDGIVVEERKPNEMKLVTGTLMNYDEETPALNVSNEPVSAKIGIAPSQINVWNPAFDITPHEFIDGIVTEEGVFTKDESGKFDLTSLF.

Catalysis depends on aspartate 284, which acts as the Proton donor.

It belongs to the eIF-2B alpha/beta/delta subunits family. MtnA subfamily.

Its subcellular location is the cytoplasm. The protein resides in the nucleus. The enzyme catalyses 5-(methylsulfanyl)-alpha-D-ribose 1-phosphate = 5-(methylsulfanyl)-D-ribulose 1-phosphate. The protein operates within amino-acid biosynthesis; L-methionine biosynthesis via salvage pathway; L-methionine from S-methyl-5-thio-alpha-D-ribose 1-phosphate: step 1/6. Its function is as follows. Catalyzes the interconversion of methylthioribose-1-phosphate (MTR-1-P) into methylthioribulose-1-phosphate (MTRu-1-P). The sequence is that of Methylthioribose-1-phosphate isomerase from Vanderwaltozyma polyspora (strain ATCC 22028 / DSM 70294 / BCRC 21397 / CBS 2163 / NBRC 10782 / NRRL Y-8283 / UCD 57-17) (Kluyveromyces polysporus).